Here is a 63-residue protein sequence, read N- to C-terminus: Putative alpha-neurotoxin RjAa9 (63 aa).

An LCN-type CS-alpha/beta domain is found at 1–60 (KEGYPVDWGNCKYECMSDEYCKDLCADRKATSGYCYKLNWSCYCKGLPDDSPIKTPGKCR). Intrachain disulfides connect Cys-11–Cys-59, Cys-15–Cys-35, Cys-21–Cys-42, and Cys-25–Cys-44.

The protein belongs to the long (4 C-C) scorpion toxin superfamily. Sodium channel inhibitor family. Alpha subfamily. As to expression, expressed by the venom gland.

The protein localises to the secreted. Its function is as follows. Alpha toxins bind voltage-independently at site-3 of sodium channels (Nav) and inhibits the inactivation of the activated channels, thereby blocking neuronal transmission. The polypeptide is Putative alpha-neurotoxin RjAa9 (Rhopalurus junceus (Caribbean blue scorpion)).